Here is a 59-residue protein sequence, read N- to C-terminus: Arabinogalactan protein 13 (59 aa).

A signal peptide spans 1 to 27; that stretch reads MEAMKMRLFVAVLVAAMAFSAVQQAAA. A 4-hydroxyproline mark is found at Pro-31, Pro-33, and Pro-35. O-linked (Ara...) hydroxyproline glycans are attached at residues Pro-31, Pro-33, and Pro-35. Residue Ser-37 is the site of GPI-anchor amidated serine attachment. Residues 38–59 constitute a propeptide, removed in mature form; the sequence is DASLAIPAFFASVATLAFGFLF.

This sequence belongs to the AG-peptide AGP family. Post-translationally, contains 4-hydroxyproline; hydroxylated on Pro-31, Pro-33 and Pro-35. O-glycosylated on hydroxyprolines; noncontiguous hydroxylproline residues are glycosylated with arabinogalactan.

Its subcellular location is the cell membrane. Functionally, proteoglycan that seems to be implicated in diverse developmental roles such as differentiation, cell-cell recognition, embryogenesis and programmed cell death. This chain is Arabinogalactan protein 13, found in Arabidopsis thaliana (Mouse-ear cress).